Here is a 216-residue protein sequence, read N- to C-terminus: NKG2-D type II integral membrane protein (216 aa).

At 1–51 the chain is on the cytoplasmic side; that stretch reads MGWIRGRRSRHSWEMSEFHNYNLDLAKNDFSTRWQKQRCPVIKSKCRENTS. The helical; Signal-anchor for type II membrane protein transmembrane segment at 52–72 threads the bilayer; sequence PLFFCCFIAVAMGIRFIVMVT. Over 73-216 the chain is Extracellular; that stretch reads IWSAVFLNSL…NTYICMQRTV (144 aa). Disulfide bonds link C96/C105 and C99/C110. The region spanning 98–213 is the C-type lectin domain; sequence PCPKNWICYK…STPNTYICMQ (116 aa). N-linked (GlcNAc...) asparagine glycosylation is found at N115, N131, N163, and N202. Intrachain disulfides connect C127/C211 and C189/C203.

Homodimer; disulfide-linked. Heterohexamer composed of two subunits of KLRK1 and four subunits of HCST/DAP10. Interacts (via transmembrane domain) with HCST/DAP10 (via transmembrane domain); the interaction is required for KLRK1 NK cell surface and induces NK cell-mediated cytotoxicity. Can form disulfide-bonded heterodimer with CD94. Interacts with CEACAM1; recruits PTPN6 that dephosphorylates VAV1.

The protein resides in the cell membrane. Functions as an activating and costimulatory receptor involved in immunosurveillance upon binding to various cellular stress-inducible ligands displayed at the surface of autologous tumor cells and virus-infected cells. Provides both stimulatory and costimulatory innate immune responses on activated killer (NK) cells, leading to cytotoxic activity. Acts as a costimulatory receptor for T-cell receptor (TCR) in CD8(+) T-cell-mediated adaptive immune responses by amplifying T-cell activation. Stimulates perforin-mediated elimination of ligand-expressing tumor cells. Signaling involves calcium influx, culminating in the expression of TNF-alpha. Participates in NK cell-mediated bone marrow graft rejection. May play a regulatory role in differentiation and survival of NK cells. Binds to ligands belonging to various subfamilies of MHC class I-related glycoproteins. This is NKG2-D type II integral membrane protein (KLRK1) from Pongo pygmaeus (Bornean orangutan).